Reading from the N-terminus, the 434-residue chain is ATP phosphoribosyltransferase regulatory subunit (434 aa).

Residues 1-48 (MYGRGSGAEHSRGSGAEHFWDPRPEASSTVSSSLRPPSGARDLLPREV) form a disordered region. Residues 27–38 (SSTVSSSLRPPS) show a composition bias toward low complexity.

It belongs to the class-II aminoacyl-tRNA synthetase family. HisZ subfamily. In terms of assembly, heteromultimer composed of HisG and HisZ subunits.

The protein localises to the cytoplasm. It functions in the pathway amino-acid biosynthesis; L-histidine biosynthesis; L-histidine from 5-phospho-alpha-D-ribose 1-diphosphate: step 1/9. Required for the first step of histidine biosynthesis. May allow the feedback regulation of ATP phosphoribosyltransferase activity by histidine. The sequence is that of ATP phosphoribosyltransferase regulatory subunit from Synechococcus sp. (strain JA-2-3B'a(2-13)) (Cyanobacteria bacterium Yellowstone B-Prime).